We begin with the raw amino-acid sequence, 198 residues long: Myb-related protein 340 (198 aa).

HTH myb-type domains follow at residues 10 to 62 and 63 to 117; these read DVEV…LNYL and RPDV…IQKH. 2 DNA-binding regions (H-T-H motif) span residues 38 to 62 and 90 to 113; these read WNTI…LNYL and WSKI…NRTR.

In terms of tissue distribution, expressed only in flowers.

It localises to the nucleus. Its function is as follows. Transcription factor. The protein is Myb-related protein 340 of Antirrhinum majus (Garden snapdragon).